Consider the following 152-residue polypeptide: Transcriptional repressor NrdR (152 aa).

The interval 1 to 21 (MRCPFCGNGDTQVKDSRPTED) is disordered. Residues 3 to 34 (CPFCGNGDTQVKDSRPTEDSAAIRRRRFCPAC) fold into a zinc finger. Positions 12–21 (QVKDSRPTED) are enriched in basic and acidic residues. The ATP-cone domain maps to 49–139 (LVIVKKDGQR…VYRNFREAKD (91 aa)).

Belongs to the NrdR family. The cofactor is Zn(2+).

Its function is as follows. Negatively regulates transcription of bacterial ribonucleotide reductase nrd genes and operons by binding to NrdR-boxes. The sequence is that of Transcriptional repressor NrdR from Rhodospirillum rubrum (strain ATCC 11170 / ATH 1.1.1 / DSM 467 / LMG 4362 / NCIMB 8255 / S1).